A 530-amino-acid polypeptide reads, in one-letter code: MLVLFETSVGYAIFKVLNEKKLQEVDSLWKEFETPEKANKIVKLKHFEKFQDTAEALAAFTALMEGKINKQLKKVLKKIVKEAHEPLAVADAKLGGVIKEKLNLSCIHSPVVNELMRGIRSQMDGLIPGVEPREMAAMCLGLAHSLSRYRLKFSADKVDTMIVQAISLLDDLDKELNNYIMRCREWYGWHFPELGKIISDNLTYCKCLQKVGDRKNYASAKLSELLPEEVEAEVKAAAEISMGTEVSEEDICNILHLCTQVIEISEYRTQLYEYLQNRMMAIAPNVTVMVGELVGARLIAHAGSLLNLAKHAASTVQILGAEKALFRALKSRRDTPKYGLIYHASLVGQTSPKHKGKISRMLAAKTVLAIRYDAFGEDSSSAMGVENRAKLEARLRTLEDRGIRKISGTGKALAKTEKYEHKSEVKTYDPSGDSTLPTCSKKRKIEQVDKEDEITEKKAKKAKIKVKVEEEEEEEKVAEEEETSVKKKKKKGKKKHIKEEPLSEEEPCTSTAIASPEKKKKKKKKRDNED.

Threonine 34 carries the phosphothreonine modification. The residue at position 109 (serine 109) is a Phosphoserine. Lysine 157 participates in a covalent cross-link: Glycyl lysine isopeptide (Lys-Gly) (interchain with G-Cter in SUMO2). A Nop domain is found at 282-400 (IAPNVTVMVG…LEARLRTLED (119 aa)). 2 positions are modified to phosphoserine: serine 304 and serine 351. Residues lysine 353, lysine 411, lysine 415, lysine 422, lysine 426, lysine 441, lysine 444, and lysine 465 each participate in a glycyl lysine isopeptide (Lys-Gly) (interchain with G-Cter in SUMO2) cross-link. The disordered stretch occupies residues 409 to 530 (TGKALAKTEK…KKKKKRDNED (122 aa)). The span at 414–427 (AKTEKYEHKSEVKT) shows a compositional bias: basic and acidic residues. Residue lysine 467 forms a Glycyl lysine isopeptide (Lys-Gly) (interchain with G-Cter in SUMO); alternate linkage. Residue lysine 467 forms a Glycyl lysine isopeptide (Lys-Gly) (interchain with G-Cter in SUMO1); alternate linkage. Lysine 467 participates in a covalent cross-link: Glycyl lysine isopeptide (Lys-Gly) (interchain with G-Cter in SUMO2); alternate. Acidic residues predominate over residues 469 to 482 (EEEEEEEKVAEEEE). Serine 484 carries the post-translational modification Phosphoserine. Residue lysine 486 forms a Glycyl lysine isopeptide (Lys-Gly) (interchain with G-Cter in SUMO2) linkage. Basic residues predominate over residues 486 to 496 (KKKKKKGKKKH). A Glycyl lysine isopeptide (Lys-Gly) (interchain with G-Cter in SUMO); alternate cross-link involves residue lysine 498. Lysine 498 is covalently cross-linked (Glycyl lysine isopeptide (Lys-Gly) (interchain with G-Cter in SUMO2); alternate). Serine 503 and serine 515 each carry phosphoserine. Positions 518–530 (KKKKKKKKRDNED) are enriched in basic residues.

The protein belongs to the NOP5/NOP56 family. Core component of box C/D small nucleolar ribonucleoprotein (snoRNP) particles; the core proteins SNU13, NOP56, NOP58 and FBL or FBLL1 assemble stepwise onto the snoRNA. Interacts with NOLC1/Nopp140. Interacts with NOPCHAP1, NUFIP1, RUVBL1 and RUVBL2; NOPCHAP1 bridges the association of NOP58 with RUVBL1:RUVBL2 and NUFIP1. Interacts with PIH1D1. Part of the small subunit (SSU) processome, composed of more than 70 proteins and the RNA chaperone small nucleolar RNA (snoRNA) U3. In terms of processing, sumoylation is essential for high-affinity binding to snoRNAs.

It is found in the nucleus. It localises to the nucleolus. Its subcellular location is the nucleoplasm. Required for the biogenesis of box C/D snoRNAs such as U3, U8 and U14 snoRNAs. Part of the small subunit (SSU) processome, first precursor of the small eukaryotic ribosomal subunit. During the assembly of the SSU processome in the nucleolus, many ribosome biogenesis factors, an RNA chaperone and ribosomal proteins associate with the nascent pre-rRNA and work in concert to generate RNA folding, modifications, rearrangements and cleavage as well as targeted degradation of pre-ribosomal RNA by the RNA exosome. Core component of box C/D small nucleolar ribonucleoprotein (snoRNP) complexes that function in methylation of multiple sites on ribosomal RNAs (rRNAs) and messenger RNAs (mRNAs). This Macaca fascicularis (Crab-eating macaque) protein is Nucleolar protein 58 (NOP58).